The following is a 1690-amino-acid chain: rRNA biogenesis protein rrp5 (1690 aa).

Disordered stretches follow at residues 1–42 and 59–90; these read MAGN…GASS and FMESASGTAELSKKTRPKKKGSKKSSKSELDN. Over residues 11-32 the composition is skewed to polar residues; it reads ASEGSDSQGNERISSLSANEAT. Over residues 72–83 the composition is skewed to basic residues; that stretch reads KTRPKKKGSKKS. 13 consecutive S1 motif domains span residues 109-209, 226-289, 306-376, 398-473, 490-559, 579-648, 666-739, 761-830, 866-942, 973-1044, 1053-1122, 1147-1216, and 1236-1307; these read GSLI…LSLK, GSMI…LTAT, GDYI…VSFL, GFIV…LSFQ, GQFV…LTLK, GTQT…VGCR, GSVL…LSLK, GIKY…MSFK, GKIT…ISHR, GDEV…IGPL, GSRL…LSAR, GDIC…MSLK, and GSNL…LGLK. The segment at 1313 to 1424 is disordered; sequence SDSDISMSDN…EEKDLDEIPS (112 aa). 3 stretches are compositionally biased toward acidic residues: residues 1348–1367, 1390–1400, and 1412–1421; these read QSEEVENLESAGDEDEEEEP, DTEDSEDEEDE, and FDDEEKDLDE. Thr1391 carries the phosphothreonine modification. Ser1394 carries the phosphoserine modification. HAT repeat units lie at residues 1420 to 1452, 1526 to 1558, and 1596 to 1628; these read DEIPSTAADFERQLLSSPNSSLLWISYMAYHLN, GKVDLADEYMQLMLKNFKQVPSVWIQYATFLLN, and GDPERGRTIFEGLLSSYPKRLDLWNVLIDMEMK. Phosphoserine is present on residues Ser1684 and Ser1686.

Component of the ribosomal small subunit (SSU) processome.

It localises to the nucleus. Its subcellular location is the nucleolus. In terms of biological role, involved in the biogenesis of rRNA. Required for the formation of 18S and 5.8S rRNA. The sequence is that of rRNA biogenesis protein rrp5 from Schizosaccharomyces pombe (strain 972 / ATCC 24843) (Fission yeast).